Here is a 189-residue protein sequence, read N- to C-terminus: Parkinson disease protein 7 homolog (189 aa).

S-palmitoyl cysteine attachment occurs at residues C46 and C53. Y67 carries the phosphotyrosine modification. C106 carries the S-palmitoyl cysteine lipid modification. The active-site Nucleophile is C106. C106 bears the Cysteine sulfinic acid (-SO2H) mark. C106 is subject to Cysteine sulfinic acid (-SO2H); alternate. Residue C106 is the site of S-palmitoyl cysteine; alternate attachment. The active site involves H126. K130 participates in a covalent cross-link: Glycyl lysine isopeptide (Lys-Gly) (interchain with G-Cter in SUMO). K148 is subject to N6-acetyllysine. K182 carries the N6-succinyllysine modification.

It belongs to the peptidase C56 family. Homodimer. It depends on Deglycase activity does not require glutathione as a cofactor, however, glycated glutathione constitutes a PARK7 substrate. as a cofactor. In terms of processing, sumoylated on Lys-130 by pias2 or pias4; which is essential for cell-growth promoting activity and transforming activity. Post-translationally, undergoes cleavage of a C-terminal peptide and subsequent activation of protease activity in response to oxidative stress. Larval brain and gut from 96 hours post-fertilization (hpf). Ubiquitous in adult; most abundant in brain, eye, heart and muscle. Within brain, neuronal expression is widespread, particularly in the cerebellum, medullary reticular formation and diencephalon. Expressed in major forebrain and diencephalic dopaminergic cell groups.

The protein localises to the cell membrane. Its subcellular location is the cytoplasm. It is found in the nucleus. It localises to the membrane raft. The protein resides in the mitochondrion. The protein localises to the endoplasmic reticulum. The catalysed reaction is N(omega)-(1-hydroxy-2-oxopropyl)-L-arginyl-[protein] + H2O = lactate + L-arginyl-[protein] + H(+). It catalyses the reaction N(6)-(1-hydroxy-2-oxopropyl)-L-lysyl-[protein] + H2O = lactate + L-lysyl-[protein] + H(+). It carries out the reaction S-(1-hydroxy-2-oxopropyl)-L-cysteinyl-[protein] + H2O = lactate + L-cysteinyl-[protein] + H(+). The enzyme catalyses N(omega)-(1-hydroxy-2-oxoethyl)-L-arginyl-[protein] + H2O = L-arginyl-[protein] + glycolate + H(+). The catalysed reaction is N(6)-(1-hydroxy-2-oxoethyl)-L-lysyl-[protein] + H2O = glycolate + L-lysyl-[protein] + H(+). It catalyses the reaction S-(1-hydroxy-2-oxoethyl)-L-cysteinyl-[protein] + H2O = glycolate + L-cysteinyl-[protein] + H(+). It carries out the reaction N(2)-(1-hydroxy-2-oxopropyl)-dGTP + H2O = lactate + dGTP + H(+). The enzyme catalyses N(2)-(1-hydroxy-2-oxopropyl)-GTP + H2O = lactate + GTP + H(+). The catalysed reaction is N(2)-(1-hydroxy-2-oxopropyl)-GDP + H2O = lactate + GDP + H(+). It catalyses the reaction N(2)-(1-hydroxy-2-oxopropyl)-GMP + H2O = lactate + GMP + H(+). It carries out the reaction N(2)-(1-hydroxy-2-oxoethyl)-dGTP + H2O = dGTP + glycolate + H(+). The enzyme catalyses N(2)-(1-hydroxy-2-oxoethyl)-GTP + H2O = glycolate + GTP + H(+). The catalysed reaction is N(2)-(1-hydroxy-2-oxoethyl)-GDP + H2O = glycolate + GDP + H(+). It catalyses the reaction N(2)-(1-hydroxy-2-oxoethyl)-GMP + H2O = glycolate + GMP + H(+). It carries out the reaction an N(2)-(1-hydroxy-2-oxopropyl)-guanosine in RNA + H2O = a guanosine in RNA + lactate + H(+). The enzyme catalyses an N(2)-(1-hydroxy-2-oxopropyl)-2'-deoxyguanosine in DNA + H2O = a 2'-deoxyguanosine in DNA + lactate + H(+). The catalysed reaction is an N(2)-(1-hydroxy-2-oxoethyl)-guanosine in RNA + H2O = a guanosine in RNA + glycolate + H(+). It catalyses the reaction an N(2)-(1-hydroxy-2-oxoethyl)-2'-deoxyguanosine in DNA + H2O = a 2'-deoxyguanosine in DNA + glycolate + H(+). Functionally, multifunctional protein with controversial molecular function which plays an important role in cell protection against oxidative stress and cell death acting as oxidative stress sensor and redox-sensitive chaperone and protease. It is involved in neuroprotective mechanisms like the stabilization of NFE2L2 and PINK1 proteins, male fertility as a positive regulator of androgen signaling pathway as well as cell growth and transformation through, for instance, the modulation of NF-kappa-B signaling pathway. Has been described as a protein and nucleotide deglycase that catalyzes the deglycation of the Maillard adducts formed between amino groups of proteins or nucleotides and reactive carbonyl groups of glyoxals. But this function is rebuted by other works. As a protein deglycase, repairs methylglyoxal- and glyoxal-glycated proteins, and releases repaired proteins and lactate or glycolate, respectively. Deglycates cysteine, arginine and lysine residues in proteins, and thus reactivates these proteins by reversing glycation by glyoxals. Acts on early glycation intermediates (hemithioacetals and aminocarbinols), preventing the formation of advanced glycation endproducts (AGE) that cause irreversible damage. Also functions as a nucleotide deglycase able to repair glycated guanine in the free nucleotide pool (GTP, GDP, GMP, dGTP) and in DNA and RNA. Is thus involved in a major nucleotide repair system named guanine glycation repair (GG repair), dedicated to reversing methylglyoxal and glyoxal damage via nucleotide sanitization and direct nucleic acid repair. Protects histones from adduction by methylglyoxal, controls the levels of methylglyoxal-derived argininine modifications on chromatin. Displays a very low glyoxalase activity that may reflect its deglycase activity. It is involved in neuroprotective mechanisms as well as cell growth and transformation. Its involvement in protein repair could also explain other unrelated functions. Eliminates hydrogen peroxide and protects cells against hydrogen peroxide-induced cell death. Required for correct mitochondrial morphology and function as well as for autophagy of dysfunctional mitochondria. Regulates astrocyte inflammatory responses, may modulate lipid rafts-dependent endocytosis in astrocytes and neuronal cells. Binds to a number of mRNAs containing multiple copies of GG or CC motifs and partially inhibits their translation but dissociates following oxidative stress. Metal-binding protein able to bind copper as well as toxic mercury ions, enhances the cell protection mechanism against induced metal toxicity. This is Parkinson disease protein 7 homolog from Danio rerio (Zebrafish).